We begin with the raw amino-acid sequence, 500 residues long: Replication factor C large subunit (500 aa).

Residue G44–T51 coordinates ATP. The tract at residues H443 to V500 is disordered. Residues T455–G466 show a composition bias toward low complexity. Residues D467–G492 show a composition bias toward acidic residues.

This sequence belongs to the activator 1 small subunits family. RfcL subfamily. As to quaternary structure, heteromultimer composed of small subunits (RfcS) and large subunits (RfcL).

In terms of biological role, part of the RFC clamp loader complex which loads the PCNA sliding clamp onto DNA. This Halorubrum lacusprofundi (strain ATCC 49239 / DSM 5036 / JCM 8891 / ACAM 34) protein is Replication factor C large subunit.